A 604-amino-acid chain; its full sequence is NADP-dependent malic enzyme, mitochondrial (604 aa).

Residues 29–50 (APAQGCHSKPGPARPVPLKKRG) are disordered. Tyr137 serves as the catalytic Proton donor. Residue Arg190 coordinates NAD(+). The active-site Proton acceptor is Lys208. Positions 280, 281, and 304 each coordinate a divalent metal cation. Asp304 is a binding site for NAD(+). At Ser371 the chain carries Phosphoserine. Asn443 contacts NAD(+).

Belongs to the malic enzymes family. The cofactor is Mg(2+). Requires Mn(2+) as cofactor. Expressed predominantly in organs with a low-division rate.

It is found in the mitochondrion matrix. It carries out the reaction (S)-malate + NADP(+) = pyruvate + CO2 + NADPH. It catalyses the reaction oxaloacetate + H(+) = pyruvate + CO2. Catalyzes the oxidative decarboxylation of (S)-malate to pyruvate using NADP(+) as a cofactor. Can also reverse the decarboxylation reaction, but only with significantly lower efficiency. This Homo sapiens (Human) protein is NADP-dependent malic enzyme, mitochondrial.